The sequence spans 218 residues: MAYDYSASLNPQKALIWRIVHRDNIPWILDNGLHCGNSLVQAENWINIGNPELIGKRAGHPVPVGTGGTLHDYVPFYFTPFSPMLMNIHSGRGGIKRRPNEEIVILVSNLRNVAAHDVPFVFTDSHAYYNWTNYYTSLNSLDQIDWPILQARDFRRDPDDPAKFERYQAEALIWQHCPISLLDGIICYSEEVRLQLEQWLFQRNLTMSVHTRSGWYFS.

A DarT domain is found at 14 to 217; sequence ALIWRIVHRD…SVHTRSGWYF (204 aa). NAD(+) is bound by residues 18-20 and Arg57; that span reads RIV. The NAD(+)-binding element stretch occupies residues 41–59; sequence QAENWINIGNPELIGKRAG. The Proton acceptor role is filled by Arg57. Residues 123–170 form an ADP-ribosylating turn-turn loop region; that stretch reads TDSHAYYNWTNYYTSLNSLDQIDWPILQARDFRRDPDDPAKFERYQAE. The active site involves Glu170.

This sequence belongs to the DarT ADP-ribosyltransferase family. In terms of assembly, interacts with cognate antitoxin DarG (via C-terminus); this heterodimeric complex neutralizes the toxic effect of DarT by preventing ssDNA binding to DarT and consequently inactivating the toxin by direct protein-protein interactions.

It carries out the reaction a thymidine in DNA + NAD(+) = an N-(ADP-alpha-D-ribosyl)-thymidine in DNA + nicotinamide + H(+). In terms of biological role, toxic component of the hybrid type II/IV toxin-antitoxin (TA) system DarTG, which plays a crucial role in controlling bacterial growth and bacteriophage infection. ADP-ribosylates ssDNA in the sequence TTT/TCT. In case of phage infection, DarT toxin ADP-ribosylates DNA, which inhibits both viral DNA and RNA synthesis and leads to abortive infection. Its toxic effect is neutralized by cognate antitoxin DarG. May target ssDNA loops during DNA replication, probably modifies thymidine. Wild-type protein cannot be expressed at low levels in the absence of its cognate antitoxin, but a mutant protein (G49D) can be expressed, which slows growth, rapidly inhibits DNA replication, and induces RecA expression and the SOS response. The slow growth phenotype can be suppressed by cognate antitoxin DarG. Has no activity on dsDNA in vitro. In vivo ADP-ribosylates genomic DNA (gDNA). Genetic data strongly suggests ADP-ribosylation by DarT probably generates ssDNA gaps that are repaired by the RecFOR-mediated homologous recombination pathway (RuvAB, RecG) and resolved by RuvC. In some cases these gaps probably migrate into dsDNA, where they are resolved by nucleotide excision repair (NER) detected by UvrAB, excised by UvrC, removed by UvrD, and repaired by Pol I and ligase. Other pathways may also be involved in ADP-ribosylation removal from DNA. The sequence is that of DNA ADP-ribosyl transferase from Escherichia coli O127:H6 (strain E2348/69 / EPEC).